A 406-amino-acid polypeptide reads, in one-letter code: GTPase Obg (406 aa).

In terms of domain architecture, Obg spans 1 to 159; that stretch reads MKFVDEVSIH…RDLKLELKVL (159 aa). A disordered region spans residues 127–148; that stretch reads NTRFKSSTNRAPRQTTPGKPGE. Residues 129–143 show a composition bias toward polar residues; the sequence is RFKSSTNRAPRQTTP. The 175-residue stretch at 160–334 folds into the OBG-type G domain; that stretch reads ADVGLLGLPN…LSQDIMRYLD (175 aa). GTP-binding positions include 166-173, 191-195, 213-216, 283-286, and 315-317; these read GLPNAGKS, FTTLV, DIPG, NKMD, and SAL. Residues serine 173 and threonine 193 each contribute to the Mg(2+) site. The tract at residues 378–406 is disordered; sequence GLKNAGAADDDDFDDEEDDGDGPEIFYVP. The span at 385-399 shows a compositional bias: acidic residues; the sequence is ADDDDFDDEEDDGDG.

It belongs to the TRAFAC class OBG-HflX-like GTPase superfamily. OBG GTPase family. As to quaternary structure, monomer. It depends on Mg(2+) as a cofactor.

The protein localises to the cytoplasm. An essential GTPase which binds GTP, GDP and possibly (p)ppGpp with moderate affinity, with high nucleotide exchange rates and a fairly low GTP hydrolysis rate. Plays a role in control of the cell cycle, stress response, ribosome biogenesis and in those bacteria that undergo differentiation, in morphogenesis control. This is GTPase Obg from Pseudomonas paraeruginosa (strain DSM 24068 / PA7) (Pseudomonas aeruginosa (strain PA7)).